A 65-amino-acid polypeptide reads, in one-letter code: Large ribosomal subunit protein bL35 (65 aa).

Belongs to the bacterial ribosomal protein bL35 family.

This is Large ribosomal subunit protein bL35 from Prochlorococcus marinus (strain NATL1A).